A 91-amino-acid chain; its full sequence is Gem-associated protein 7 homolog (91 aa).

The Sm domain maps to 18 to 86; the sequence is LKFYQKMASA…VVGIEYNLVQ (69 aa).

This sequence belongs to the gemin-7 family. As to quaternary structure, part of the core SMN complex at least composed of smn1, yip11/gem2, gem6, gem7 and gem8. Interacts with gem6; the interaction is direct. Interacts with gem8; the interaction is direct.

The sequence is that of Gem-associated protein 7 homolog from Schizosaccharomyces pombe (strain 972 / ATCC 24843) (Fission yeast).